A 105-amino-acid polypeptide reads, in one-letter code: MANWDGKYISPYAEHGKKSEQVKKITVSIPIKVLEILTNERTRRQIRNLRHATNSELLCEAFLHAFTGQPLPTDEDLLKERHDEIPEQAKQVMRELGIDPEKWEY.

This sequence belongs to the MetJ family. Homodimer.

The protein resides in the cytoplasm. In terms of biological role, this regulatory protein, when combined with SAM (S-adenosylmethionine) represses the expression of the methionine regulon and of enzymes involved in SAM synthesis. This Pasteurella multocida (strain Pm70) protein is Met repressor.